The sequence spans 87 residues: Bradykinin-potentiating peptide NDBP12 (87 aa).

The N-terminal stretch at 1–22 (MNKRVLLVIFFVTLLVADEVNS) is a signal peptide. Residues 64–75 (PAEAPAPAAAAP) show a composition bias toward low complexity. Residues 64–87 (PAEAPAPAAAAPEEPPVEQRRRRR) are disordered.

It belongs to the non-disulfide-bridged peptide (NDBP) superfamily. Long chain multifunctional peptide (group 2) family. As to expression, expressed by the venom gland.

It localises to the secreted. Its function is as follows. Inhibits angiotensin-converting enzyme (ACE), but does not serve as substrate for the enzyme. Potentiates bradykinin (BK) on the isolated guinea pig ileum as well as the isolated rat uterus for contraction. Also potentiates in vivo the depressor effect of BK on arterial blood pressure in the normotensive anesthetized rat. The protein is Bradykinin-potentiating peptide NDBP12 of Lychas mucronatus (Chinese swimming scorpion).